The chain runs to 711 residues: Polyribonucleotide nucleotidyltransferase (711 aa).

Positions 490 and 496 each coordinate Mg(2+). The KH domain maps to 557-616 (PRIETMQIPTDKIREVIGSGGKVIREIVETSGAKVDINDDGIIKIASANGEAIKKAYEMI). The region spanning 626-694 (GKVYTGTVVK…DRGKVRLSMK (69 aa)) is the S1 motif domain.

This sequence belongs to the polyribonucleotide nucleotidyltransferase family. It depends on Mg(2+) as a cofactor.

It localises to the cytoplasm. The enzyme catalyses RNA(n+1) + phosphate = RNA(n) + a ribonucleoside 5'-diphosphate. Functionally, involved in mRNA degradation. Catalyzes the phosphorolysis of single-stranded polyribonucleotides processively in the 3'- to 5'-direction. The sequence is that of Polyribonucleotide nucleotidyltransferase from Dinoroseobacter shibae (strain DSM 16493 / NCIMB 14021 / DFL 12).